Reading from the N-terminus, the 301-residue chain is Mitochondrial carnitine/acylcarnitine carrier protein (301 aa).

An N-acetylalanine modification is found at Ala-2. Residues 2–12 (ADQPKPISPLK) are Cytoplasmic-facing. Solcar repeat units lie at residues 8–99 (ISPL…GKKL), 108–196 (LSYP…VKNI), and 207–293 (LSVP…AMKF). A helical membrane pass occupies residues 13 to 31 (NLLAGGFGGVCLVFVGHPL). The Mitochondrial matrix portion of the chain corresponds to 32–73 (DTVKVRLQTQPPSLPGQPPMYSGTFDCFRKTLFREGIRGLYR). A helical transmembrane segment spans residues 74-93 (GMAAPIIGVTPMFAVCFFGF). At 94–112 (GLGKKLQQKHPEDVLSYPQ) the chain is on the cytoplasmic side. The helical transmembrane segment at 113–131 (LFAAGMLSGIFTTGIMTPG) threads the bilayer. Residues 132 to 170 (ERIKCLLQIQASSGETKYTGTLDCAKKLYQEFGIRGIYK) are Mitochondrial matrix-facing. 2 positions are modified to N6-acetyllysine: Lys-148 and Lys-157. Lys-170 is subject to N6-acetyllysine; alternate. An N6-succinyllysine; alternate modification is found at Lys-170. Residues 171 to 190 (GTVVTLMRDVPASGMYFMTY) form a helical membrane-spanning segment. Residues 191–211 (EWVKNIFTPEGKRVSELSVPR) are Cytoplasmic-facing. A helical membrane pass occupies residues 212 to 230 (VLVAGGIAGIFNWAVAIPP). At 231-267 (DVLKSRFQTAPPGKYPNGFRDVLRELIPDEGVTSLYK) the chain is on the mitochondrial matrix side. The chain crosses the membrane as a helical span at residues 268–287 (GFNAVMIRAFPANAACFLGF). Over 288–301 (EVAMKFLNWATPNL) the chain is Cytoplasmic.

This sequence belongs to the mitochondrial carrier (TC 2.A.29) family.

It localises to the mitochondrion inner membrane. It catalyses the reaction O-acetyl-(R)-carnitine(in) + (R)-carnitine(out) = O-acetyl-(R)-carnitine(out) + (R)-carnitine(in). The catalysed reaction is an O-acyl-(R)-carnitine(in) + (R)-carnitine(out) = an O-acyl-(R)-carnitine(out) + (R)-carnitine(in). It carries out the reaction O-propanoyl-(R)-carnitine(in) + (R)-carnitine(out) = O-propanoyl-(R)-carnitine(out) + (R)-carnitine(in). The enzyme catalyses O-hexadecanoyl-(R)-carnitine(in) + (R)-carnitine(out) = O-hexadecanoyl-(R)-carnitine(out) + (R)-carnitine(in). It catalyses the reaction O-octanoyl-(R)-carnitine(in) + (R)-carnitine(out) = O-octanoyl-(R)-carnitine(out) + (R)-carnitine(in). The catalysed reaction is (R)-carnitine(in) = (R)-carnitine(out). In terms of biological role, mediates the electroneutral exchange of acylcarnitines (O-acyl-(R)-carnitine or L-acylcarnitine) of different acyl chain lengths (ranging from O-acetyl-(R)-carnitine to long-chain O-acyl-(R)-carnitines) with free carnitine ((R)-carnitine or L-carnitine) across the mitochondrial inner membrane, via a ping-pong mechanism. Key player in the mitochondrial oxidation pathway, it translocates the fatty acids in the form of acylcarnitines into the mitochondrial matrix, where the carnitine palmitoyltransferase 2 (CPT-2) activates them to undergo fatty acid beta-oxidation. Catalyzes the unidirectional transport (uniport) of carnitine at lower rates than the antiport (exchange). This chain is Mitochondrial carnitine/acylcarnitine carrier protein (SLC25A20), found in Macaca fascicularis (Crab-eating macaque).